The sequence spans 367 residues: MMGSVLPAEALVLKTGLKAPGLALAEVITSDILHSFLYGRWRNVLGEQLFEDKSHHASPKTAFTAEVLAQSFSGEVQKLSSLVLPAEVIIAQSSIPGEGLGIFSKTWIKAGTEMGPFTGRVIAPEHVDICKNNNLMWEVFNEDGTVRYFIDASQEDHRSWMTYIKCARNEQEQNLEVVQIGTSIFYKAIEMIPPDQELLVWYGNSHNTFLGIPGVPGLEEDQKKNKHEDFHPADSAAGPAGRMRCVICHRGFNSRSNLRSHMRIHTLDKPFVCRFCNRRFSQSSTLRNHVRLHTGERPYKCQVCQSAYSQLAGLRAHQKSARHRPPSTALQAHSPALPAPHAHAPALAAAAAAAAAAAAHHLPAMVL.

In terms of domain architecture, SET spans 86–203; it reads AEVIIAQSSI…PDQELLVWYG (118 aa). 3 C2H2-type zinc fingers span residues 243-265, 271-293, and 299-323; these read MRCVICHRGFNSRSNLRSHMRIH, FVCRFCNRRFSQSSTLRNHVRLH, and YKCQVCQSAYSQLAGLRAHQKSARH. The tract at residues 318 to 337 is disordered; that stretch reads QKSARHRPPSTALQAHSPAL.

It belongs to the class V-like SAM-binding methyltransferase superfamily. In terms of assembly, interacts with EHMT2. Not found in adult tissues except in dorsal root ganglia.

It is found in the nucleus. Its function is as follows. Transcriptional regulator necessary for the development of nociceptive neurons, playing a key role in determining the nociceptive lineage from neural crest cell progenitors. Initiates neurogenesis and activates downstream pro-neuronal transcription factors, such as NEUROD1, BRN3A, and ISL1, specifically within nociceptive neurons, while repressing non-nociceptor cell fates. Essential for the proper function of nociceptors in adults, influencing both their excitability and their gene expression, thereby impacting how these neurons respond to various pain stimuli. This is PR domain zinc finger protein 12 (PRDM12) from Homo sapiens (Human).